The primary structure comprises 141 residues: Nucleoside diphosphate kinase (141 aa).

ATP contacts are provided by K9, F57, R85, T91, R102, and N112. Residue H115 is the Pros-phosphohistidine intermediate of the active site.

It belongs to the NDK family. Homotetramer. Mg(2+) is required as a cofactor.

Its subcellular location is the cytoplasm. It catalyses the reaction a 2'-deoxyribonucleoside 5'-diphosphate + ATP = a 2'-deoxyribonucleoside 5'-triphosphate + ADP. The catalysed reaction is a ribonucleoside 5'-diphosphate + ATP = a ribonucleoside 5'-triphosphate + ADP. In terms of biological role, major role in the synthesis of nucleoside triphosphates other than ATP. The ATP gamma phosphate is transferred to the NDP beta phosphate via a ping-pong mechanism, using a phosphorylated active-site intermediate. This Chlamydia trachomatis serovar A (strain ATCC VR-571B / DSM 19440 / HAR-13) protein is Nucleoside diphosphate kinase.